The chain runs to 142 residues: MQPAGISHSLFPSLPPEFLPLALYTLAASILIGVLLLAAWWLGAKTTNRNKELPYESGAIPTGSARLAYPVPFYLIAIFFIVFDVEAAFIFAWATAWRELGLQGLVHITFFIVILLLGLVWLWLKGGLDWGPSRARRGHVRD.

3 helical membrane-spanning segments follow: residues 18-38, 73-93, and 104-124; these read FLPLALYTLAASILIGVLLLA, FYLIAIFFIVFDVEAAFIFAW, and GLVHITFFIVILLLGLVWLWL.

This sequence belongs to the complex I subunit 3 family. In terms of assembly, NDH-1 is composed of 14 different subunits. Subunits NuoA, H, J, K, L, M, N constitute the membrane sector of the complex.

The protein localises to the cell inner membrane. The catalysed reaction is a quinone + NADH + 5 H(+)(in) = a quinol + NAD(+) + 4 H(+)(out). In terms of biological role, NDH-1 shuttles electrons from NADH, via FMN and iron-sulfur (Fe-S) centers, to quinones in the respiratory chain. The immediate electron acceptor for the enzyme in this species is believed to be ubiquinone. Couples the redox reaction to proton translocation (for every two electrons transferred, four hydrogen ions are translocated across the cytoplasmic membrane), and thus conserves the redox energy in a proton gradient. This Geobacter sulfurreducens (strain ATCC 51573 / DSM 12127 / PCA) protein is NADH-quinone oxidoreductase subunit A 2.